Reading from the N-terminus, the 419-residue chain is 4-hydroxyphenylpyruvate dioxygenase (419 aa).

2 VOC domains span residues 41–187 (GYHH…FIQR) and 218–376 (AIDH…LFTK). His221, His304, and Glu387 together coordinate Fe cation.

The protein belongs to the 4HPPD family. Fe cation serves as cofactor.

It carries out the reaction 3-(4-hydroxyphenyl)pyruvate + O2 = homogentisate + CO2. It participates in amino-acid degradation; L-phenylalanine degradation; acetoacetate and fumarate from L-phenylalanine: step 3/6. This Zymoseptoria tritici (Speckled leaf blotch fungus) protein is 4-hydroxyphenylpyruvate dioxygenase (HPPD).